We begin with the raw amino-acid sequence, 231 residues long: U1 small nuclear ribonucleoprotein C (231 aa).

Residues 4 to 36 (YYCEYCHSYLTHDTLSVRKSHLVGKNHLRITAD) form a Matrin-type zinc finger. The segment covering 49–61 (HNHKRRHIGKRGR) has biased composition (basic residues). Disordered stretches follow at residues 49 to 71 (HNHK…SQNE), 137 to 177 (PQRA…LEPP), and 205 to 231 (ESKK…RYGN).

This sequence belongs to the U1 small nuclear ribonucleoprotein C family. In terms of assembly, U1 snRNP is composed of the 7 core Sm proteins SMB1, SMD1, SMD2, SMD3, SME1, SMX3 and SMX2 (Sm proteins B, D1, D2, D3, E, F and G, respectively) that assemble in a heptameric protein ring on the Sm site of the small nuclear RNA to form the core snRNP, and at least 10 U1 snRNP-specific proteins SNP1/U1-70K, MUD1/U1-A, YHC1/U1-C, LUC7, NAM8, PRP39, PRP40, PRP42, SNU56 and SNU71. YHC1/U1-C interacts with U1 snRNA and the 5' splice-site region of the pre-mRNA.

Its subcellular location is the nucleus. Its function is as follows. Component of the spliceosomal U1 snRNP, which is essential for recognition of the pre-mRNA 5' splice-site and the subsequent assembly of the spliceosome. YHC1/U1-C is directly involved in initial 5' splice-site recognition for both constitutive and regulated alternative splicing. The interaction with the 5' splice-site seems to precede base-pairing between the pre-mRNA and the U1 snRNA. Stimulates commitment or early (E) complex formation by stabilizing the base pairing of the 5' end of the U1 snRNA and the 5' splice-site region. This is U1 small nuclear ribonucleoprotein C from Saccharomyces cerevisiae (strain ATCC 204508 / S288c) (Baker's yeast).